The sequence spans 232 residues: tRNA (guanine-N(1)-)-methyltransferase (232 aa).

S-adenosyl-L-methionine is bound by residues Gly111 and 131-136 (IGDYIL).

Belongs to the RNA methyltransferase TrmD family. In terms of assembly, homodimer.

The protein resides in the cytoplasm. It catalyses the reaction guanosine(37) in tRNA + S-adenosyl-L-methionine = N(1)-methylguanosine(37) in tRNA + S-adenosyl-L-homocysteine + H(+). In terms of biological role, specifically methylates guanosine-37 in various tRNAs. This chain is tRNA (guanine-N(1)-)-methyltransferase, found in Bartonella tribocorum (strain CIP 105476 / IBS 506).